The chain runs to 1035 residues: Sialidase A (1035 aa).

A signal peptide spans 1–53; sequence MSYFRNRDIDIERNSMNRSVQERKCRYSIRKLSVGAVSMIVGAVVFGTSPVLA. A disordered region spans residues 57–112; it reads ASEQPLANETQLSGESSTLTDTEKSQPSSETELSGNKQEQERKDKQEEKIPRDYYA. Positions 61-92 are enriched in polar residues; the sequence is PLANETQLSGESSTLTDTEKSQPSSETELSGN. Positions 94–112 are enriched in basic and acidic residues; it reads QEQERKDKQEEKIPRDYYA. Arginine 347 contributes to the substrate binding site. The active-site Proton acceptor is the aspartate 372. BNR repeat units lie at residues 381–392, 539–550, and 607–618; these read RRSEDNGKTWGD, SYSDDDGKTWSA, and IYSDDHGKTWHA. Glutamate 647 is an active-site residue. Arginine 663 serves as a coordination point for substrate. The stretch at 672-683 is one BNR 4 repeat; the sequence is ATSKDGGVTWEK. Positions 902–951 are disordered; sequence GPLGTSGEEPAPTVEKPEYTGPLGTSGEEPAPTVEKPEYTGPLGTAGEEA. An LPXTG sorting signal motif is present at residues 1003–1007; it reads LPETG. Threonine 1006 is subject to Pentaglycyl murein peptidoglycan amidated threonine. The propeptide at 1007–1035 is removed by sortase; sequence GNKESDLLASLGLTAFFLGLFTLGKKREQ.

This sequence belongs to the glycosyl hydrolase 33 family.

It is found in the secreted. Its subcellular location is the cell wall. It carries out the reaction Hydrolysis of alpha-(2-&gt;3)-, alpha-(2-&gt;6)-, alpha-(2-&gt;8)- glycosidic linkages of terminal sialic acid residues in oligosaccharides, glycoproteins, glycolipids, colominic acid and synthetic substrates.. This Streptococcus pneumoniae protein is Sialidase A (nanA).